A 160-amino-acid polypeptide reads, in one-letter code: Ribonuclease H (160 aa).

Residues Pro-5 to Glu-146 enclose the RNase H type-1 domain. Positions 14, 52, 74, and 138 each coordinate Mg(2+).

Belongs to the RNase H family. Monomer. It depends on Mg(2+) as a cofactor.

Its subcellular location is the cytoplasm. It catalyses the reaction Endonucleolytic cleavage to 5'-phosphomonoester.. Its function is as follows. Endonuclease that specifically degrades the RNA of RNA-DNA hybrids. This is Ribonuclease H from Acidiphilium cryptum (strain JF-5).